Consider the following 516-residue polypeptide: Methionine--tRNA ligase (516 aa).

The short motif at 13–23 is the 'HIGH' region element; that stretch reads FYPNGKPHIGH. The 'KMSKS' region motif lies at 299–303; that stretch reads KMSKS. An ATP-binding site is contributed by Lys-302.

This sequence belongs to the class-I aminoacyl-tRNA synthetase family. MetG type 2B subfamily. Monomer.

It is found in the cytoplasm. It catalyses the reaction tRNA(Met) + L-methionine + ATP = L-methionyl-tRNA(Met) + AMP + diphosphate. In terms of biological role, is required not only for elongation of protein synthesis but also for the initiation of all mRNA translation through initiator tRNA(fMet) aminoacylation. The sequence is that of Methionine--tRNA ligase from Mesorhizobium japonicum (strain LMG 29417 / CECT 9101 / MAFF 303099) (Mesorhizobium loti (strain MAFF 303099)).